Reading from the N-terminus, the 348-residue chain is tRNA N6-adenosine threonylcarbamoyltransferase (348 aa).

2 residues coordinate Fe cation: histidine 120 and histidine 124. Residues 143 to 147 (LVSGG), aspartate 176, glycine 189, and asparagine 282 each bind substrate. A Fe cation-binding site is contributed by aspartate 310.

This sequence belongs to the KAE1 / TsaD family. The cofactor is Fe(2+).

It is found in the cytoplasm. The catalysed reaction is L-threonylcarbamoyladenylate + adenosine(37) in tRNA = N(6)-L-threonylcarbamoyladenosine(37) in tRNA + AMP + H(+). In terms of biological role, required for the formation of a threonylcarbamoyl group on adenosine at position 37 (t(6)A37) in tRNAs that read codons beginning with adenine. Is involved in the transfer of the threonylcarbamoyl moiety of threonylcarbamoyl-AMP (TC-AMP) to the N6 group of A37, together with TsaE and TsaB. TsaD likely plays a direct catalytic role in this reaction. The chain is tRNA N6-adenosine threonylcarbamoyltransferase from Paracidovorax citrulli (strain AAC00-1) (Acidovorax citrulli).